Here is a 267-residue protein sequence, read N- to C-terminus: RWD domain-containing protein 3 (267 aa).

The region spanning 7–114 (QELSALAAIF…LWTQQNLRHI (108 aa)) is the RWD domain. Interaction with UBE2I/UBC9 stretches follow at residues 13–15 (AAI) and 100–102 (VHE).

In terms of assembly, interacts with UBE2I/UBC9, NFKBIA, HIF1A and NCOA2.

Its subcellular location is the nucleus. It is found in the cytoplasm. In terms of biological role, enhancer of SUMO conjugation. Via its interaction with UBE2I/UBC9, increases SUMO conjugation to proteins by promoting the binding of E1 and E2 enzymes, thioester linkage between SUMO and UBE2I/UBC9 and transfer of SUMO to specific target proteins which include HIF1A, PIAS, NFKBIA, NR3C1 and TOP1. Positively regulates the NF-kappa-B signaling pathway by enhancing the sumoylation of NF-kappa-B inhibitor alpha (NFKBIA), promoting its stabilization which consequently leads to an increased inhibition of NF-kappa-B transcriptional activity. Negatively regulates the hypoxia-inducible factor-1 alpha (HIF1A) signaling pathway by increasing the sumoylation of HIF1A, promoting its stabilization, transcriptional activity and the expression of its target gene VEGFA during hypoxia. Has no effect on ubiquitination. The protein is RWD domain-containing protein 3 (Rwdd3) of Rattus norvegicus (Rat).